Reading from the N-terminus, the 464-residue chain is Type I restriction enzyme EcoKI specificity subunit (464 aa).

This sequence belongs to the type-I restriction system S methylase family. The type I restriction/modification system is composed of three polypeptides R, M and S. The restriction enzyme has stoichiometry R(2)M(2)S(1). The methyltransferase is composed of M(2)S(1). In terms of assembly, (Microbial infection) Interacts with Escherichia phage T7 protein Ocr; this interaction leads to the inhibition of the methyltransferase restriction enzyme M.EcoKI composed of M(2)S(1).

Functionally, the specificity (S) subunit of a type I restriction enzyme; this subunit dictates DNA sequence specificity. The M and S subunits together form a methyltransferase (MTase) that methylates A-2 on the top and A-3 on the bottom strand of the sequence 5'-AACN(6)GTGC-3'. In the presence of the R subunit the complex can also act as an endonuclease, binding to the same target sequence but cutting the DNA some distance from this site. Whether the DNA is cut or modified depends on the methylation state of the target sequence. When the target site is unmodified, the DNA is cut. When the target site is hemimethylated, the complex acts as a maintenance MTase modifying the DNA so that both strands become methylated. After locating a non-methylated recognition site, the enzyme complex serves as a molecular motor that translocates DNA in an ATP-dependent manner until a collision occurs that triggers cleavage. This Escherichia coli (strain K12) protein is Type I restriction enzyme EcoKI specificity subunit.